The chain runs to 213 residues: Citrate synthase, mitochondrial (213 aa).

His-74 is an active-site residue. An N6-acetyllysine; alternate mark is found at Lys-94 and Lys-100. An N6-succinyllysine; alternate mark is found at Lys-94 and Lys-100. The active site involves His-120. Position 129 (Arg-129) interacts with oxaloacetate. The residue at position 148 (Lys-148) is an N6-acetyllysine; alternate. N6-succinyllysine; alternate is present on Lys-148. At Lys-155 the chain carries N6-acetyllysine. An N6-acetyllysine; alternate modification is found at Lys-166. N6-succinyllysine; alternate is present on Lys-166. An N6,N6,N6-trimethyllysine modification is found at Lys-168. Residue Asp-175 is part of the active site. Position 201 (Arg-201) interacts with oxaloacetate.

The protein belongs to the citrate synthase family. In terms of assembly, homodimer. In response to mitochondrial stress, the precursor protein is ubiquitinated by the SIFI complex in the cytoplasm before mitochondrial import, leading to its degradation. Within the SIFI complex, UBR4 initiates ubiquitin chain that are further elongated or branched by KCMF1.

The protein localises to the mitochondrion matrix. It carries out the reaction oxaloacetate + acetyl-CoA + H2O = citrate + CoA + H(+). It functions in the pathway carbohydrate metabolism; tricarboxylic acid cycle; isocitrate from oxaloacetate: step 1/2. Its function is as follows. Key enzyme of the Krebs tricarboxylic acid cycle which catalyzes the synthesis of citrate from acetyl coenzyme A and oxaloacetate. The chain is Citrate synthase, mitochondrial from Mesocricetus auratus (Golden hamster).